Here is a 368-residue protein sequence, read N- to C-terminus: Zinc finger protein 24 (368 aa).

Residue Lys22 forms a Glycyl lysine isopeptide (Lys-Gly) (interchain with G-Cter in SUMO2) linkage. Lys27 participates in a covalent cross-link: Glycyl lysine isopeptide (Lys-Gly) (interchain with G-Cter in SUMO1); alternate. Residue Lys27 forms a Glycyl lysine isopeptide (Lys-Gly) (interchain with G-Cter in SUMO2); alternate linkage. The SCAN box domain occupies 52–134 (RQRFRQFGYQ…TVLEDLESEL (83 aa)). A phosphoserine mark is found at Ser132 and Ser142. Glycyl lysine isopeptide (Lys-Gly) (interchain with G-Cter in SUMO2) cross-links involve residues Lys147, Lys177, and Lys236. The segment at 251-273 (HICDECGKHFSQGSALILHQRIH) adopts a C2H2-type 1 zinc-finger fold. The necessary and sufficient for nuclear localization stretch occupies residues 251–301 (HICDECGKHFSQGSALILHQRIHSGEKPYGCVECGKAFSRSSILVQHQRVH). Ser274 is subject to Phosphoserine. Glycyl lysine isopeptide (Lys-Gly) (interchain with G-Cter in SUMO2) cross-links involve residues Lys277 and Lys286. 3 consecutive C2H2-type zinc fingers follow at residues 279 to 301 (YGCVECGKAFSRSSILVQHQRVH), 307 to 329 (YKCLECGKAFSQNSGLINHQRIH), and 335 to 357 (YECVQCGKSYSQSSNLFRHXXXH). Ser292 is subject to Phosphoserine. The residue at position 335 (Tyr335) is a Phosphotyrosine. Residues Lys361 and Lys367 each participate in a glycyl lysine isopeptide (Lys-Gly) (interchain with G-Cter in SUMO2) cross-link.

Belongs to the krueppel C2H2-type zinc-finger protein family. In terms of processing, sumoylated.

It localises to the nucleus. Its function is as follows. Transcription factor required for myelination of differentiated oligodendrocytes. Required for the conversion of oligodendrocytes from the premyelinating to the myelinating state. In the developing central nervous system (CNS), involved in the maintenance in the progenitor stage by promoting the cell cycle. Specifically binds to the 5'-TCAT-3' DNA sequence. Has transcription repressor activity in vitro. The sequence is that of Zinc finger protein 24 (ZNF24) from Pan paniscus (Pygmy chimpanzee).